The following is a 519-amino-acid chain: Sorting nexin-2 (519 aa).

Disordered stretches follow at residues 1-20 and 30-103; these read MAAE…DFEE and STVS…VTPV. 2 stretches are compositionally biased toward low complexity: residues 30 to 44 and 93 to 103; these read STVS…SPDP and SSETSPAVTPV. Residue serine 97 is modified to Phosphoserine. Phosphothreonine occurs at positions 101 and 104. Serine 117 and serine 119 each carry phosphoserine. The 130-residue stretch at 140–269 folds into the PX domain; sequence FDIEIGVSDP…QFLESSELPR (130 aa). The a 1,2-diacyl-sn-glycero-3-phospho-(1D-myo-inositol-3-phosphate) site is built by arginine 183, serine 185, lysine 211, and arginine 235. At serine 185 the chain carries Phosphoserine. Positions 260-519 are interaction with RhoG; sequence QFLESSELPR…AFLPEAKAIA (260 aa). The residue at position 277 (serine 277) is a Phosphoserine. The tract at residues 278–295 is membrane-binding amphipathic helix; it reads GAGILRMVNKAADAVNKM. The region spanning 299–519 is the BAR domain; that stretch reads MNESDAWFEE…AFLPEAKAIA (221 aa). Position 469 is an N6-acetyllysine (lysine 469).

The protein belongs to the sorting nexin family. As to quaternary structure, predominantly forms heterodimers with BAR domain-containing sorting nexins SNX5, SNX6 and SNX32; can self-associate to form homodimers. The heterodimers are proposed to self-assemble into helical arrays on the membrane to stabilize and expand local membrane curvature underlying endosomal tubule formation. Thought to be a component of the originally described retromer complex (also called SNX-BAR retromer) which is a pentamer containing the heterotrimeric retromer cargo-selective complex (CSC), also decribed as vacuolar protein sorting subcomplex (VPS) and a heterodimeric membrane-deforming subcomplex formed between SNX1 or SNX2 and SNX5 or SNX6 (also called SNX-BAR subcomplex); the respective CSC and SNX-BAR subcomplexes associate with low affinity. Interacts with SNX5, SNX6, SNX32, VPS26A, VPS29, VPS35, FNBP1, KALRN, RHOG (GDP-bound form).

The protein resides in the early endosome membrane. It localises to the cell projection. It is found in the lamellipodium. In terms of biological role, involved in several stages of intracellular trafficking. Interacts with membranes containing phosphatidylinositol 3-phosphate (PtdIns(3P)) or phosphatidylinositol 3,5-bisphosphate (PtdIns(3,5)P2). Acts in part as component of the retromer membrane-deforming SNX-BAR subcomplex. The SNX-BAR retromer mediates retrograde transport of cargo proteins from endosomes to the trans-Golgi network (TGN) and is involved in endosome-to-plasma membrane transport for cargo protein recycling. The SNX-BAR subcomplex functions to deform the donor membrane into a tubular profile called endosome-to-TGN transport carrier (ETC). Can sense membrane curvature and has in vitro vesicle-to-membrane remodeling activity. Required for retrograde endosome-to-TGN transport of TGN38. Promotes KALRN- and RHOG-dependent but retromer-independent membrane remodeling such as lamellipodium formation; the function is dependent on GEF activity of KALRN. The polypeptide is Sorting nexin-2 (SNX2) (Bos taurus (Bovine)).